Reading from the N-terminus, the 488-residue chain is Malonate-semialdehyde dehydrogenase 2 (488 aa).

5 residues coordinate NAD(+): phenylalanine 155, lysine 179, glutamate 182, arginine 183, and serine 232. The Nucleophile role is filled by cysteine 287. Glutamate 387 is a binding site for NAD(+).

The protein belongs to the aldehyde dehydrogenase family. IolA subfamily. Homotetramer.

It carries out the reaction 3-oxopropanoate + NAD(+) + CoA + H2O = hydrogencarbonate + acetyl-CoA + NADH + H(+). It catalyses the reaction 2-methyl-3-oxopropanoate + NAD(+) + CoA + H2O = propanoyl-CoA + hydrogencarbonate + NADH + H(+). Its pathway is polyol metabolism; myo-inositol degradation into acetyl-CoA; acetyl-CoA from myo-inositol: step 7/7. Catalyzes the oxidation of malonate semialdehyde (MSA) and methylmalonate semialdehyde (MMSA) into acetyl-CoA and propanoyl-CoA, respectively. Is involved in a myo-inositol catabolic pathway. Bicarbonate, and not CO2, is the end-product of the enzymatic reaction. The protein is Malonate-semialdehyde dehydrogenase 2 of Bacillus cereus (strain ZK / E33L).